A 528-amino-acid chain; its full sequence is GMP synthase [glutamine-hydrolyzing] (528 aa).

The Glutamine amidotransferase type-1 domain occupies 13–204; sequence AIVILDFGSQ…VYHVCGCDPD (192 aa). Residue cysteine 90 is the Nucleophile of the active site. Catalysis depends on residues histidine 178 and glutamate 180. Residues 205-403 enclose the GMPS ATP-PPase domain; that stretch reads WTTAAFIDEA…LGLPEEIVRR (199 aa). 232–238 lines the ATP pocket; the sequence is SGGVDSS.

As to quaternary structure, homodimer.

It carries out the reaction XMP + L-glutamine + ATP + H2O = GMP + L-glutamate + AMP + diphosphate + 2 H(+). Its pathway is purine metabolism; GMP biosynthesis; GMP from XMP (L-Gln route): step 1/1. In terms of biological role, catalyzes the synthesis of GMP from XMP. The polypeptide is GMP synthase [glutamine-hydrolyzing] (Synechococcus sp. (strain CC9605)).